The primary structure comprises 192 residues: Fe/S biogenesis protein NfuA (192 aa).

[4Fe-4S] cluster-binding residues include Cys-149 and Cys-152.

Belongs to the NfuA family. Homodimer. [4Fe-4S] cluster serves as cofactor.

Involved in iron-sulfur cluster biogenesis. Binds a 4Fe-4S cluster, can transfer this cluster to apoproteins, and thereby intervenes in the maturation of Fe/S proteins. Could also act as a scaffold/chaperone for damaged Fe/S proteins. In Alteromonas mediterranea (strain DSM 17117 / CIP 110805 / LMG 28347 / Deep ecotype), this protein is Fe/S biogenesis protein NfuA.